Consider the following 1202-residue polypeptide: Adenine-specific methyltransferase PglX (1202 aa).

Belongs to the methyltransferase superfamily. PglX adenine methyltransferase family.

It catalyses the reaction a 2'-deoxyadenosine in DNA + S-adenosyl-L-methionine = an N(6)-methyl-2'-deoxyadenosine in DNA + S-adenosyl-L-homocysteine + H(+). Functionally, BREX systems (bacteriophage exclusion) provide immunity against bacteriophage. Part of a type 1 BREX system which protects against dsDNA phage. This system allows phage adsorption but prevents phage DNA replication, without degradation of the phage DNA. Methylation of bacterial DNA by this protein guides self/non-self discrimination. In terms of biological role, probably methylates the adenine in the fifth position of the hexamer 5'-ACRCAG-3' in genomic DNA. N(6)-methylated adenine on the fifth position of 5'-ACRCAG-3' is found in the genome; there are 1906 sites in the genomic DNA. This is Adenine-specific methyltransferase PglX from Lacticaseibacillus casei (strain Zhang) (Lactobacillus casei).